A 358-amino-acid polypeptide reads, in one-letter code: Alanine racemase (358 aa).

The active-site Proton acceptor; specific for D-alanine is Lys34. The residue at position 34 (Lys34) is an N6-(pyridoxal phosphate)lysine. Arg129 provides a ligand contact to substrate. Tyr254 acts as the Proton acceptor; specific for L-alanine in catalysis. Met302 contributes to the substrate binding site.

Belongs to the alanine racemase family. The cofactor is pyridoxal 5'-phosphate.

The enzyme catalyses L-alanine = D-alanine. Its pathway is amino-acid biosynthesis; D-alanine biosynthesis; D-alanine from L-alanine: step 1/1. Its function is as follows. Catalyzes the interconversion of L-alanine and D-alanine. May also act on other amino acids. In Vibrio atlanticus (strain LGP32) (Vibrio splendidus (strain Mel32)), this protein is Alanine racemase (alr).